We begin with the raw amino-acid sequence, 254 residues long: 3-oxo-5-alpha-steroid 4-dehydrogenase 2 (254 aa).

A run of 4 helical transmembrane segments spans residues 8 to 28 (SPVL…LYVA), 72 to 92 (PLSL…VHYF), 146 to 166 (FCLG…SDYI), and 206 to 226 (LATW…FLGL).

Belongs to the steroid 5-alpha reductase family.

Its subcellular location is the microsome membrane. It localises to the endoplasmic reticulum membrane. It catalyses the reaction a 3-oxo-5alpha-steroid + NADP(+) = a 3-oxo-Delta(4)-steroid + NADPH + H(+). The catalysed reaction is 17beta-hydroxy-5alpha-androstan-3-one + NADP(+) = testosterone + NADPH + H(+). It carries out the reaction 5alpha-pregnane-3,20-dione + NADP(+) = progesterone + NADPH + H(+). In terms of biological role, converts testosterone (T) into 5-alpha-dihydrotestosterone (DHT) and progesterone or corticosterone into their corresponding 5-alpha-3-oxosteroids. It plays a central role in sexual differentiation and androgen physiology. The sequence is that of 3-oxo-5-alpha-steroid 4-dehydrogenase 2 (SRD5A2) from Macaca fascicularis (Crab-eating macaque).